The chain runs to 312 residues: DNA-directed RNA polymerase subunit alpha (312 aa).

Residues 1–229 (MLQYQIDRIE…ELFQPLATVT (229 aa)) form an alpha N-terminal domain (alpha-NTD) region. The interval 239-312 (EPSAEAQIPL…ISIPQSRTSA (74 aa)) is alpha C-terminal domain (alpha-CTD).

The protein belongs to the RNA polymerase alpha chain family. As to quaternary structure, in cyanobacteria the RNAP catalytic core is composed of 2 alpha, 1 beta, 1 beta', 1 gamma and 1 omega subunit. When a sigma factor is associated with the core the holoenzyme is formed, which can initiate transcription.

The catalysed reaction is RNA(n) + a ribonucleoside 5'-triphosphate = RNA(n+1) + diphosphate. Its function is as follows. DNA-dependent RNA polymerase catalyzes the transcription of DNA into RNA using the four ribonucleoside triphosphates as substrates. The sequence is that of DNA-directed RNA polymerase subunit alpha from Synechococcus sp. (strain CC9605).